Consider the following 268-residue polypeptide: Ribosomal RNA large subunit methyltransferase E (268 aa).

Residues 1–60 (MKPPRSRSGSSKDTGPKRIPGKALKSASNPGENDATLDSATARTARNKTVSLRTARGRTT) are disordered. Residues 26-52 (SASNPGENDATLDSATARTARNKTVSL) are compositionally biased toward polar residues. Residues Gly115, Trp117, Asp133, Asp149, and Asp173 each contribute to the S-adenosyl-L-methionine site. The active-site Proton acceptor is the Lys213.

It belongs to the class I-like SAM-binding methyltransferase superfamily. RNA methyltransferase RlmE family.

The protein resides in the cytoplasm. The catalysed reaction is uridine(2552) in 23S rRNA + S-adenosyl-L-methionine = 2'-O-methyluridine(2552) in 23S rRNA + S-adenosyl-L-homocysteine + H(+). Specifically methylates the uridine in position 2552 of 23S rRNA at the 2'-O position of the ribose in the fully assembled 50S ribosomal subunit. The protein is Ribosomal RNA large subunit methyltransferase E of Gluconobacter oxydans (strain 621H) (Gluconobacter suboxydans).